A 580-amino-acid chain; its full sequence is Glutamine--tRNA ligase (580 aa).

Positions 51–61 (PEPNGYLHIGH) match the 'HIGH' region motif. ATP contacts are provided by residues 52-54 (EPN) and 58-64 (HIGHAKS). L-glutamine contacts are provided by Asp84 and Tyr233. ATP-binding positions include Thr252 and 287–288 (RL). The 'KMSKS' region motif lies at 294-298 (ITSKR).

Belongs to the class-I aminoacyl-tRNA synthetase family. Monomer.

Its subcellular location is the cytoplasm. The catalysed reaction is tRNA(Gln) + L-glutamine + ATP = L-glutaminyl-tRNA(Gln) + AMP + diphosphate. The polypeptide is Glutamine--tRNA ligase (Ralstonia nicotianae (strain ATCC BAA-1114 / GMI1000) (Ralstonia solanacearum)).